A 354-amino-acid polypeptide reads, in one-letter code: Trans-L-3-hydroxyproline dehydratase (354 aa).

Cysteine 104 acts as the Proton acceptor in catalysis. Substrate contacts are provided by residues 105-106, aspartate 269, and 274-275; these read GH and GS.

This sequence belongs to the proline racemase family. Homodimer.

The enzyme catalyses trans-3-hydroxy-L-proline = 1-pyrroline-2-carboxylate + H2O. In terms of biological role, catalyzes the dehydration of trans-3-hydroxy-L-proline to delta-1-pyrroline-2-carboxylate (Pyr2C). The chain is Trans-L-3-hydroxyproline dehydratase (L3HYPDH) from Pongo abelii (Sumatran orangutan).